The chain runs to 296 residues: UDP-N-acetylenolpyruvoylglucosamine reductase (296 aa).

Residues 19–203 (KVGGFAEYFS…LETTQKNLKK (185 aa)) form the FAD-binding PCMH-type domain. Arg166 is a catalytic residue. Catalysis depends on Ser217, which acts as the Proton donor. Glu287 is a catalytic residue.

Belongs to the MurB family. The cofactor is FAD.

Its subcellular location is the cytoplasm. The enzyme catalyses UDP-N-acetyl-alpha-D-muramate + NADP(+) = UDP-N-acetyl-3-O-(1-carboxyvinyl)-alpha-D-glucosamine + NADPH + H(+). The protein operates within cell wall biogenesis; peptidoglycan biosynthesis. Its function is as follows. Cell wall formation. This is UDP-N-acetylenolpyruvoylglucosamine reductase from Prochlorococcus marinus subsp. pastoris (strain CCMP1986 / NIES-2087 / MED4).